A 333-amino-acid polypeptide reads, in one-letter code: Ribosomal RNA small subunit methyltransferase H (333 aa).

Residues 43–45, aspartate 62, tyrosine 89, aspartate 110, and glutamine 117 contribute to the S-adenosyl-L-methionine site; that span reads GGH. The segment at 312-333 is disordered; sequence RLRAARRIRTTPTRPSPRRRRP.

This sequence belongs to the methyltransferase superfamily. RsmH family.

It is found in the cytoplasm. The enzyme catalyses cytidine(1402) in 16S rRNA + S-adenosyl-L-methionine = N(4)-methylcytidine(1402) in 16S rRNA + S-adenosyl-L-homocysteine + H(+). Functionally, specifically methylates the N4 position of cytidine in position 1402 (C1402) of 16S rRNA. This chain is Ribosomal RNA small subunit methyltransferase H, found in Beutenbergia cavernae (strain ATCC BAA-8 / DSM 12333 / CCUG 43141 / JCM 11478 / NBRC 16432 / NCIMB 13614 / HKI 0122).